The sequence spans 480 residues: Glutamate--tRNA ligase (480 aa).

The short motif at 12-22 is the 'HIGH' region element; it reads PSPTGAPHLGL. Residues 255–259 carry the 'KMSKS' region motif; the sequence is KLSKR. Residue Lys258 coordinates ATP.

It belongs to the class-I aminoacyl-tRNA synthetase family. Glutamate--tRNA ligase type 1 subfamily. Monomer.

It is found in the cytoplasm. It carries out the reaction tRNA(Glu) + L-glutamate + ATP = L-glutamyl-tRNA(Glu) + AMP + diphosphate. Functionally, catalyzes the attachment of glutamate to tRNA(Glu) in a two-step reaction: glutamate is first activated by ATP to form Glu-AMP and then transferred to the acceptor end of tRNA(Glu). This is Glutamate--tRNA ligase from Tropheryma whipplei (strain TW08/27) (Whipple's bacillus).